The sequence spans 229 residues: Cytochrome c oxidase subunit 2 (229 aa).

Topologically, residues 1 to 14 (MANPSQFGFQDASS) are mitochondrial intermembrane. The helical transmembrane segment at 15–45 (PIMEELVEFHDHALMVALAICSLVLYLLALM) threads the bilayer. Residues 46–58 (LVEKLSSNTVDAQ) are Mitochondrial matrix-facing. The chain crosses the membrane as a helical span at residues 59–86 (EVELIWTILPAIVLILLALPSLQILYMM). The Mitochondrial intermembrane portion of the chain corresponds to 87–229 (DEIDEPDLTL…SWSSLLSTDS (143 aa)). H160, C195, E197, C199, H203, and M206 together coordinate Cu cation. E197 contributes to the Mg(2+) binding site.

The protein belongs to the cytochrome c oxidase subunit 2 family. Component of the cytochrome c oxidase (complex IV, CIV), a multisubunit enzyme composed of 14 subunits. The complex is composed of a catalytic core of 3 subunits MT-CO1, MT-CO2 and MT-CO3, encoded in the mitochondrial DNA, and 11 supernumerary subunits COX4I, COX5A, COX5B, COX6A, COX6B, COX6C, COX7A, COX7B, COX7C, COX8 and NDUFA4, which are encoded in the nuclear genome. The complex exists as a monomer or a dimer and forms supercomplexes (SCs) in the inner mitochondrial membrane with NADH-ubiquinone oxidoreductase (complex I, CI) and ubiquinol-cytochrome c oxidoreductase (cytochrome b-c1 complex, complex III, CIII), resulting in different assemblies (supercomplex SCI(1)III(2)IV(1) and megacomplex MCI(2)III(2)IV(2)). Found in a complex with TMEM177, COA6, COX18, COX20, SCO1 and SCO2. Interacts with TMEM177 in a COX20-dependent manner. Interacts with COX20. Interacts with COX16. Cu cation is required as a cofactor.

It localises to the mitochondrion inner membrane. It carries out the reaction 4 Fe(II)-[cytochrome c] + O2 + 8 H(+)(in) = 4 Fe(III)-[cytochrome c] + 2 H2O + 4 H(+)(out). In terms of biological role, component of the cytochrome c oxidase, the last enzyme in the mitochondrial electron transport chain which drives oxidative phosphorylation. The respiratory chain contains 3 multisubunit complexes succinate dehydrogenase (complex II, CII), ubiquinol-cytochrome c oxidoreductase (cytochrome b-c1 complex, complex III, CIII) and cytochrome c oxidase (complex IV, CIV), that cooperate to transfer electrons derived from NADH and succinate to molecular oxygen, creating an electrochemical gradient over the inner membrane that drives transmembrane transport and the ATP synthase. Cytochrome c oxidase is the component of the respiratory chain that catalyzes the reduction of oxygen to water. Electrons originating from reduced cytochrome c in the intermembrane space (IMS) are transferred via the dinuclear copper A center (CU(A)) of subunit 2 and heme A of subunit 1 to the active site in subunit 1, a binuclear center (BNC) formed by heme A3 and copper B (CU(B)). The BNC reduces molecular oxygen to 2 water molecules using 4 electrons from cytochrome c in the IMS and 4 protons from the mitochondrial matrix. In Struthio camelus (Common ostrich), this protein is Cytochrome c oxidase subunit 2 (MT-CO2).